Consider the following 226-residue polypeptide: Fibrillarin-like rRNA/tRNA 2'-O-methyltransferase (226 aa).

S-adenosyl-L-methionine contacts are provided by residues 82 to 83, 100 to 101, 125 to 126, and 145 to 148; these read TT, EF, DA, and DVAQ.

Belongs to the methyltransferase superfamily. Fibrillarin family. In terms of assembly, interacts with nop5. Component of box C/D small ribonucleoprotein (sRNP) particles that contain rpl7ae, FlpA and nop5, plus a guide RNA.

Its function is as follows. Involved in pre-rRNA and tRNA processing. Utilizes the methyl donor S-adenosyl-L-methionine to catalyze the site-specific 2'-hydroxyl methylation of ribose moieties in rRNA and tRNA. Site specificity is provided by a guide RNA that base pairs with the substrate. Methylation occurs at a characteristic distance from the sequence involved in base pairing with the guide RNA. This Methanosarcina barkeri (strain Fusaro / DSM 804) protein is Fibrillarin-like rRNA/tRNA 2'-O-methyltransferase.